The sequence spans 612 residues: UvrABC system protein C (612 aa).

The GIY-YIG domain maps to 20–98 (THSGVYRMLD…IKQHRPKYNI (79 aa)). Residues 208 to 243 (SSVLEEISAKMYQASEDMEYEKAQVYRDQLVVLRKL) enclose the UVR domain.

This sequence belongs to the UvrC family. As to quaternary structure, interacts with UvrB in an incision complex.

The protein resides in the cytoplasm. In terms of biological role, the UvrABC repair system catalyzes the recognition and processing of DNA lesions. UvrC both incises the 5' and 3' sides of the lesion. The N-terminal half is responsible for the 3' incision and the C-terminal half is responsible for the 5' incision. The protein is UvrABC system protein C of Francisella tularensis subsp. mediasiatica (strain FSC147).